The following is a 486-amino-acid chain: Small ribosomal subunit protein uS17B (486 aa).

Positions 1-112 are 30S ribosomal protein S17; that stretch reads MRDIGINGIK…IENKSNINFV (112 aa). Residues 113–486 are unknown; the sequence is DNLLNVDDKW…ELWTRKNYKS (374 aa).

It belongs to the universal ribosomal protein uS17 family. As to quaternary structure, part of the 30S ribosomal subunit.

Functionally, one of the primary rRNA binding proteins, it binds specifically to the 5'-end of 16S ribosomal RNA. The polypeptide is Small ribosomal subunit protein uS17B (Methanosarcina acetivorans (strain ATCC 35395 / DSM 2834 / JCM 12185 / C2A)).